The primary structure comprises 295 residues: 4-hydroxy-tetrahydrodipicolinate synthase (295 aa).

Residue T47 participates in pyruvate binding. Catalysis depends on Y135, which acts as the Proton donor/acceptor. K163 serves as the catalytic Schiff-base intermediate with substrate. Pyruvate is bound at residue I206.

It belongs to the DapA family. Homodimer.

It is found in the cytoplasm. It catalyses the reaction L-aspartate 4-semialdehyde + pyruvate = (2S,4S)-4-hydroxy-2,3,4,5-tetrahydrodipicolinate + H2O + H(+). Its pathway is amino-acid biosynthesis; L-lysine biosynthesis via DAP pathway; (S)-tetrahydrodipicolinate from L-aspartate: step 3/4. In terms of biological role, catalyzes the condensation of (S)-aspartate-beta-semialdehyde [(S)-ASA] and pyruvate to 4-hydroxy-tetrahydrodipicolinate (HTPA). In Staphylococcus aureus (strain MSSA476), this protein is 4-hydroxy-tetrahydrodipicolinate synthase.